The sequence spans 243 residues: Ras-related protein Rab-12 (243 aa).

N-acetylmethionine is present on methionine 1. Residues 1–36 form a disordered region; that stretch reads MDPSAALHRRPAGGSLGAVSPALSGGQARRRKQPPR. Phosphoserine occurs at positions 15, 20, and 24. Residues glycine 51, valine 52, glycine 53, lysine 54, threonine 55, serine 72, and threonine 73 each coordinate GTP. Threonine 55 is a Mg(2+) binding site. 2 consecutive short sequence motifs (switch) follow at residues 64–78 and 96–113; these read DTFCEACKSTVGVDF and DTAGQERFNSITSAYYRS. Mg(2+) is bound by residues threonine 73 and aspartate 96. Glycine 99 contributes to the GTP binding site. Phosphoserine; by LRRK2 is present on serine 105. Positions 154, 155, 157, 185, 186, and 187 each coordinate GTP. S-geranylgeranyl cysteine attachment occurs at residues cysteine 242 and cysteine 243.

This sequence belongs to the small GTPase superfamily. Rab family. As to quaternary structure, interacts with RABIF and OPTN. Interacts with LRRK2; interaction facilitates phosphorylation of Ser-105. Interacts with GDI1, GDI2, CHM and CHML; these interactions are disrupted by phosphorylation on Ser-105. Interacts with RILPL1 and RILPL2; these interactions are dependent on phosphorylation of Ser-105. The cofactor is Mg(2+). In terms of processing, phosphorylation of Ser-105 in the switch II region by LRRK2 prevents the association of RAB regulatory proteins, including CHM, CHML and RAB GDP dissociation inhibitors GDI1 and GDI2. Ubiquitously expressed.

It is found in the recycling endosome membrane. The protein resides in the lysosome membrane. It localises to the golgi apparatus membrane. The protein localises to the cytoplasmic vesicle. Its subcellular location is the autophagosome. It catalyses the reaction GTP + H2O = GDP + phosphate + H(+). Regulated by guanine nucleotide exchange factors (GEFs) including DENND3 which promote the exchange of bound GDP for free GTP. Regulated by GTPase activating proteins (GAPs) which increase the GTP hydrolysis activity. Inhibited by GDP dissociation inhibitors (GDIs). Its function is as follows. The small GTPases Rab are key regulators of intracellular membrane trafficking, from the formation of transport vesicles to their fusion with membranes. Rabs cycle between an inactive GDP-bound form and an active GTP-bound form that is able to recruit to membranes different set of downstream effectors directly responsible for vesicle formation, movement, tethering and fusion. RAB12 may play a role in protein transport from recycling endosomes to lysosomes regulating, for instance, the degradation of the transferrin receptor. Involved in autophagy. The chain is Ras-related protein Rab-12 from Mus musculus (Mouse).